A 97-amino-acid polypeptide reads, in one-letter code: UPF0125 protein plu3376 (97 aa).

This sequence belongs to the UPF0125 (RnfH) family.

The polypeptide is UPF0125 protein plu3376 (Photorhabdus laumondii subsp. laumondii (strain DSM 15139 / CIP 105565 / TT01) (Photorhabdus luminescens subsp. laumondii)).